The sequence spans 1087 residues: Band 4.1-like protein 3 (1087 aa).

M1 bears the N-acetylmethionine mark. The interval 1–43 (MTTESGSDSESKPDQEAEPQEAAGAQGRAGAPVPEPPKEEQQQ) is disordered. An N-acetylthreonine; in Band 4.1-like protein 3, N-terminally processed modification is found at T2. Low complexity predominate over residues 20 to 32 (QEAAGAQGRAGAP). At S88 the chain carries Phosphoserine. Residues 110–391 (MQCKVILLDG…EHHTFFRLLL (282 aa)) form the FERM domain. A hydrophilic region spans residues 394–513 (APPKKFLTLG…PGLGTDSCPL (120 aa)). S420, S443, and S460 each carry phosphoserine. Residues 459–469 (ISQTNLITTVT) show a composition bias toward polar residues. Disordered stretches follow at residues 459–529 (ISQT…TELR), 541–563 (GYEPSRAEHLPGEPALDSDGPGR), 675–715 (SASL…EDAE), and 937–965 (SETLEQKPHFESSTVKTETISFGSVSPGG). 2 positions are modified to phosphothreonine: T469 and T492. The spectrin--actin-binding stretch occupies residues 514 to 860 (SPPSTHCAPT…VVQETVLVEE (347 aa)). The segment covering 516-526 (PSTHCAPTSPT) has biased composition (polar residues). A compositionally biased stretch (acidic residues) spans 681 to 691 (DPSDSSEEETD). Residues 698 to 707 (AADGETTATE) are compositionally biased toward low complexity. The residue at position 706 (T706) is a Phosphothreonine. Phosphoserine is present on residues S708, S960, and S962. The segment at 861 to 1083 (RRVVHASGDA…VHKETEITPE (223 aa)) is C-terminal (CTD). Residues 947–960 (ESSTVKTETISFGS) show a composition bias toward polar residues. The residue at position 1081 (T1081) is a Phosphothreonine.

Interacts (via FERM domain) with CADM1. Interacts (via FERM domain) with PRMT3; the interaction is direct and inhibits the protein-arginine N-methyltransferase activity of PRMT3. Interacts with PRMT5. Interacts with PRMT6. As to expression, expressed at high levels in brain, with lower levels in kidney, intestine, and testis. Detected in lung.

It is found in the cytoplasm. Its subcellular location is the cytoskeleton. The protein resides in the cell junction. The protein localises to the cell membrane. Tumor suppressor that inhibits cell proliferation and promotes apoptosis. Modulates the activity of protein arginine N-methyltransferases, including PRMT3 and PRMT5. In Homo sapiens (Human), this protein is Band 4.1-like protein 3.